The primary structure comprises 366 residues: MSVVDPSLIERIIRDDVRAMGAYHVPDSHGLVKLDAMENPYRLPPALRSELAARLGEVALNRYPVPSSEALRAKLKEVMQVPAGMEVLLGNGSDEIISMLALAAARPGAKVMAPVPGFVMYAMSAQFAGLEFVGVPLRADFTLDRGAMLAAMAEHQPAIVYLAYPNNPTGNLFDAADMEAIVRAAQGSVCRSLVVVDEAYQPFAQESWMSRLTDFGNLLVMRTVSKLGLAGIRLGYVAGDPQWLEQLDKVRPPYNVNVLTEATALFALEHVAVLDEQAAQLRAERSRVAEGMAAHGGVTVFPSAANFLLARVPDAAQTFDRLLARKVLIKNVSKMHPLLANCLRVTVSTPEENAQFLEAFAASLQD.

K226 carries the post-translational modification N6-(pyridoxal phosphate)lysine.

It belongs to the class-II pyridoxal-phosphate-dependent aminotransferase family. Histidinol-phosphate aminotransferase subfamily. Homodimer. It depends on pyridoxal 5'-phosphate as a cofactor.

It catalyses the reaction L-histidinol phosphate + 2-oxoglutarate = 3-(imidazol-4-yl)-2-oxopropyl phosphate + L-glutamate. It functions in the pathway amino-acid biosynthesis; L-histidine biosynthesis; L-histidine from 5-phospho-alpha-D-ribose 1-diphosphate: step 7/9. This Cupriavidus pinatubonensis (strain JMP 134 / LMG 1197) (Cupriavidus necator (strain JMP 134)) protein is Histidinol-phosphate aminotransferase 2.